Reading from the N-terminus, the 309-residue chain is Homoserine O-succinyltransferase (309 aa).

Cys142 functions as the Acyl-thioester intermediate in the catalytic mechanism. Residues Lys163 and Ser192 each contribute to the substrate site. His235 serves as the catalytic Proton acceptor. Glu237 is an active-site residue. Arg249 is a substrate binding site.

This sequence belongs to the MetA family. Homodimer.

The protein localises to the cytoplasm. It catalyses the reaction L-homoserine + succinyl-CoA = O-succinyl-L-homoserine + CoA. The protein operates within amino-acid biosynthesis; L-methionine biosynthesis via de novo pathway; O-succinyl-L-homoserine from L-homoserine: step 1/1. Functionally, transfers a succinyl group from succinyl-CoA to L-homoserine, forming succinyl-L-homoserine. This Escherichia coli (strain SE11) protein is Homoserine O-succinyltransferase.